Consider the following 461-residue polypeptide: MYIDDTIAAIATAPGEAGIGIVRISGEKAIELIDKIFKSKDHKVLSQYKSRRITYGHIIDPKTEKVVDEVLVSYMKGPNTYTREDIVEINCHGGMIPVKNILELVLRVGARMAEPGEFTKRAFLNGRIDLAQAEAIMDLISAKTEKGFDVALSQLEGSLSKKVAKVREKLLDMLAHVEVSIDFAEDDVDEVALDYLLNKSLEVEGDIQKLLDTADTGKIIREGLSTVIVGKPNVGKSSLLNALVRESRAIVTDVPGTTRDIIEEHLNIKGIPLRLIDTAGIRDTEDIVEKIGVERSKELFNLADLIIVMLDASRELTEEDLRIIELIENKRALVIINKTDLQQKLNLTPIQEIIQDKKIIKVSLIEEIGLEEIEDALAEMVYKGGAKAKDSLLVTNVRHKNALERALDSIIDGTKAIEQKLPLDFVEVDIKNSWKALGEITGDTVEEDIIDHIFKNFCIGK.

Residues arginine 23, glutamate 88, and arginine 127 each contribute to the (6S)-5-formyl-5,6,7,8-tetrahydrofolate site. Residues 223 to 382 (GLSTVIVGKP…IEDALAEMVY (160 aa)) form the TrmE-type G domain. Asparagine 233 serves as a coordination point for K(+). Residues 233–238 (NVGKSS), 252–258 (TDVPGTT), and 277–280 (DTAG) each bind GTP. Position 237 (serine 237) interacts with Mg(2+). Residues threonine 252, valine 254, and threonine 257 each contribute to the K(+) site. Threonine 258 contributes to the Mg(2+) binding site. Lysine 461 contacts (6S)-5-formyl-5,6,7,8-tetrahydrofolate.

Belongs to the TRAFAC class TrmE-Era-EngA-EngB-Septin-like GTPase superfamily. TrmE GTPase family. As to quaternary structure, homodimer. Heterotetramer of two MnmE and two MnmG subunits. K(+) is required as a cofactor.

Its subcellular location is the cytoplasm. Exhibits a very high intrinsic GTPase hydrolysis rate. Involved in the addition of a carboxymethylaminomethyl (cmnm) group at the wobble position (U34) of certain tRNAs, forming tRNA-cmnm(5)s(2)U34. The polypeptide is tRNA modification GTPase MnmE (Alkaliphilus oremlandii (strain OhILAs) (Clostridium oremlandii (strain OhILAs))).